The following is a 285-amino-acid chain: uncharacterized protein (285 aa).

The 99-residue stretch at 184 to 282 folds into the HTH araC/xylS-type domain; it reads HSICNWVQDN…GLTPGEYSAR (99 aa). 2 consecutive DNA-binding regions (H-T-H motif) follow at residues 201-222 and 249-272; these read ESVA…AQHG and IHEV…RRQF.

This is an uncharacterized protein from Escherichia coli (strain K12).